A 321-amino-acid polypeptide reads, in one-letter code: tRNA-dihydrouridine synthase B (321 aa).

FMN is bound by residues 16–18 (PMA) and Gln-70. Cys-100 functions as the Proton donor in the catalytic mechanism. FMN is bound by residues Lys-139, 200 to 202 (NGD), and 224 to 225 (GR).

The protein belongs to the Dus family. DusB subfamily. FMN serves as cofactor.

The enzyme catalyses a 5,6-dihydrouridine in tRNA + NAD(+) = a uridine in tRNA + NADH + H(+). It catalyses the reaction a 5,6-dihydrouridine in tRNA + NADP(+) = a uridine in tRNA + NADPH + H(+). In terms of biological role, catalyzes the synthesis of 5,6-dihydrouridine (D), a modified base found in the D-loop of most tRNAs, via the reduction of the C5-C6 double bond in target uridines. The protein is tRNA-dihydrouridine synthase B of Salmonella typhi.